Reading from the N-terminus, the 145-residue chain is Bacilliredoxin SAOUHSC_01610 (145 aa).

This sequence belongs to the bacilliredoxin family.

The polypeptide is Bacilliredoxin SAOUHSC_01610 (Staphylococcus aureus (strain NCTC 8325 / PS 47)).